A 424-amino-acid polypeptide reads, in one-letter code: Na(+)/H(+) antiporter NhaA (424 aa).

11 helical membrane passes run 23–43 (ILLI…LATL), 65–85 (VHLW…GLEI), 102–122 (LPFI…MFFV), 131–151 (GWAI…ALLG), 160–180 (LFLV…IALF), 183–203 (AKIN…MFAC), 211–231 (LLVY…SGVH), 265–285 (ALHP…NAGV), 303–323 (IAAG…WLAV), 341–361 (AVSM…SLAF), and 373–393 (IGIL…LRLA).

This sequence belongs to the NhaA Na(+)/H(+) (TC 2.A.33) antiporter family.

It localises to the cell inner membrane. It carries out the reaction Na(+)(in) + 2 H(+)(out) = Na(+)(out) + 2 H(+)(in). Na(+)/H(+) antiporter that extrudes sodium in exchange for external protons. In Sphingopyxis alaskensis (strain DSM 13593 / LMG 18877 / RB2256) (Sphingomonas alaskensis), this protein is Na(+)/H(+) antiporter NhaA.